A 492-amino-acid polypeptide reads, in one-letter code: Bifunctional protein GlmU (492 aa).

Residues 1 to 241 (MTFRGDTAVV…SALVAGVNDR (241 aa)) form a pyrophosphorylase region. UDP-N-acetyl-alpha-D-glucosamine-binding positions include 12 to 15 (LAAG), Lys26, Gln83, and 88 to 89 (GT). Residue Asp114 coordinates Mg(2+). UDP-N-acetyl-alpha-D-glucosamine is bound by residues Gly151, Glu166, Asn181, and Asn239. Residue Asn239 coordinates Mg(2+). A linker region spans residues 242–262 (VQLAQLGAELNRRIVAAHQMA). The interval 263–492 (GVTVIDPATT…TPPPDADHPP (230 aa)) is N-acetyltransferase. The UDP-N-acetyl-alpha-D-glucosamine site is built by Arg344 and Lys362. His374 serves as the catalytic Proton acceptor. Residues Tyr377 and Asn388 each coordinate UDP-N-acetyl-alpha-D-glucosamine. Acetyl-CoA is bound by residues Ala391, 397–398 (NY), and Ala434. The interval 443 to 492 (PPGALAVSGGPQRNIEDWVQQKRPGTPSAEAARKASAEQSTPPPDADHPP) is disordered.

The protein in the N-terminal section; belongs to the N-acetylglucosamine-1-phosphate uridyltransferase family. This sequence in the C-terminal section; belongs to the transferase hexapeptide repeat family. As to quaternary structure, homotrimer. Requires Mg(2+) as cofactor.

The protein localises to the cytoplasm. It carries out the reaction alpha-D-glucosamine 1-phosphate + acetyl-CoA = N-acetyl-alpha-D-glucosamine 1-phosphate + CoA + H(+). The enzyme catalyses N-acetyl-alpha-D-glucosamine 1-phosphate + UTP + H(+) = UDP-N-acetyl-alpha-D-glucosamine + diphosphate. It participates in nucleotide-sugar biosynthesis; UDP-N-acetyl-alpha-D-glucosamine biosynthesis; N-acetyl-alpha-D-glucosamine 1-phosphate from alpha-D-glucosamine 6-phosphate (route II): step 2/2. The protein operates within nucleotide-sugar biosynthesis; UDP-N-acetyl-alpha-D-glucosamine biosynthesis; UDP-N-acetyl-alpha-D-glucosamine from N-acetyl-alpha-D-glucosamine 1-phosphate: step 1/1. It functions in the pathway bacterial outer membrane biogenesis; LPS lipid A biosynthesis. Catalyzes the last two sequential reactions in the de novo biosynthetic pathway for UDP-N-acetylglucosamine (UDP-GlcNAc). The C-terminal domain catalyzes the transfer of acetyl group from acetyl coenzyme A to glucosamine-1-phosphate (GlcN-1-P) to produce N-acetylglucosamine-1-phosphate (GlcNAc-1-P), which is converted into UDP-GlcNAc by the transfer of uridine 5-monophosphate (from uridine 5-triphosphate), a reaction catalyzed by the N-terminal domain. The polypeptide is Bifunctional protein GlmU (Mycobacterium ulcerans (strain Agy99)).